A 119-amino-acid chain; its full sequence is uncharacterized protein (119 aa).

This is an uncharacterized protein from Saccharomyces cerevisiae (strain ATCC 204508 / S288c) (Baker's yeast).